Consider the following 1803-residue polypeptide: Transposon Ty4-J Gag-Pol polyprotein (1803 aa).

Residues 39 to 115 adopt a coiled-coil conformation; sequence RKVSIKDEQV…IQLLETNENN (77 aa). Residues 382-502 are ty4 protease; it reads NNHLSPVQNE…KTKMVLSRKY (121 aa). The active-site For protease activity; shared with dimeric partner is aspartate 415. The segment at 540-600 is integrase-type zinc finger-like; that stretch reads AIKPTSSPGF…EPNEFWCQTC (61 aa). An Integrase catalytic domain is found at 620-787; sequence TDHEPGSSWC…LPLKAISRQP (168 aa). Mg(2+) is bound by residues aspartate 631 and aspartate 696. The interval 1224–1250 is disordered; that stretch reads KRKRKRHDKNNSLTSYELERDKKRSKK. A Reverse transcriptase Ty1/copia-type domain is found at 1376–1511; the sequence is RNMFMKTLDI…DILGMDLVYN (136 aa). Aspartate 1384, aspartate 1463, aspartate 1464, aspartate 1645, glutamate 1687, and aspartate 1721 together coordinate Mg(2+). The region spanning 1645–1791 is the RNase H Ty1/copia-type domain; sequence DASVGSEYDA…KRFIQVLKNK (147 aa).

As to quaternary structure, the protease is a homodimer, whose active site consists of two apposed aspartic acid residues. In terms of processing, proteolytically processed into capsid protein (CA), Ty4 protease (PR), integrase (IN) and reverse transcriptase/ribonuclease H (RT) proteins. Initially, virus-like particles (VLPs) are composed of the structural unprocessed proteins Gag and Gag-Pol, and also contain the host initiator methionine tRNA (tRNA(i)-Met) which serves as a primer for minus-strand DNA synthesis, and a dimer of genomic Ty RNA. Processing of the polyproteins occurs within the particle and proceeds by an ordered pathway, called maturation. First, the protease (PR) is released by autocatalytic cleavage of the Gag-Pol polyprotein, and this cleavage is a prerequisite for subsequent processing at the remaining sites to release the mature structural and catalytic proteins. Maturation takes place prior to the RT reaction and is required to produce transposition-competent VLPs.

The protein resides in the cytoplasm. It is found in the nucleus. It carries out the reaction DNA(n) + a 2'-deoxyribonucleoside 5'-triphosphate = DNA(n+1) + diphosphate. The catalysed reaction is Endonucleolytic cleavage to 5'-phosphomonoester.. Capsid protein (CA) is the structural component of the virus-like particle (VLP), forming the shell that encapsulates the retrotransposons dimeric RNA genome. In terms of biological role, the aspartyl protease (PR) mediates the proteolytic cleavages of the Gag and Gag-Pol polyproteins after assembly of the VLP. Its function is as follows. Reverse transcriptase/ribonuclease H (RT) is a multifunctional enzyme that catalyzes the conversion of the retro-elements RNA genome into dsDNA within the VLP. The enzyme displays a DNA polymerase activity that can copy either DNA or RNA templates, and a ribonuclease H (RNase H) activity that cleaves the RNA strand of RNA-DNA heteroduplexes during plus-strand synthesis and hydrolyzes RNA primers. The conversion leads to a linear dsDNA copy of the retrotransposon that includes long terminal repeats (LTRs) at both ends. Functionally, integrase (IN) targets the VLP to the nucleus, where a subparticle preintegration complex (PIC) containing at least integrase and the newly synthesized dsDNA copy of the retrotransposon must transit the nuclear membrane. Once in the nucleus, integrase performs the integration of the dsDNA into the host genome. The sequence is that of Transposon Ty4-J Gag-Pol polyprotein (TY4B-J) from Saccharomyces cerevisiae (strain ATCC 204508 / S288c) (Baker's yeast).